An 84-amino-acid chain; its full sequence is UPF0512 protein O (84 aa).

Belongs to the UPF0512 family.

The protein is UPF0512 protein O of Dictyostelium discoideum (Social amoeba).